The chain runs to 217 residues: Adenylate kinase (217 aa).

Residue 10-15 (GAGKGT) participates in ATP binding. Residues 30–59 (STGDMLRAAIREGTELGLKAKSVMESGGLV) form an NMP region. AMP contacts are provided by residues T31, R36, 57-59 (GLV), 85-88 (GFPR), and Q92. Residues 122-159 (GRRQHPASGRVYHVVYNPPKVEGKDDETGEDLVQRPDD) are LID. Residues R123 and 132–133 (VY) each bind ATP. Residues R156 and R167 each contribute to the AMP site. R202 provides a ligand contact to ATP.

It belongs to the adenylate kinase family. As to quaternary structure, monomer.

Its subcellular location is the cytoplasm. The enzyme catalyses AMP + ATP = 2 ADP. It participates in purine metabolism; AMP biosynthesis via salvage pathway; AMP from ADP: step 1/1. Functionally, catalyzes the reversible transfer of the terminal phosphate group between ATP and AMP. Plays an important role in cellular energy homeostasis and in adenine nucleotide metabolism. In Acinetobacter baumannii (strain AB307-0294), this protein is Adenylate kinase.